Consider the following 129-residue polypeptide: Small ribosomal subunit protein uS11 (129 aa).

Belongs to the universal ribosomal protein uS11 family. In terms of assembly, part of the 30S ribosomal subunit. Interacts with proteins S7 and S18. Binds to IF-3.

In terms of biological role, located on the platform of the 30S subunit, it bridges several disparate RNA helices of the 16S rRNA. Forms part of the Shine-Dalgarno cleft in the 70S ribosome. In Staphylococcus saprophyticus subsp. saprophyticus (strain ATCC 15305 / DSM 20229 / NCIMB 8711 / NCTC 7292 / S-41), this protein is Small ribosomal subunit protein uS11.